Reading from the N-terminus, the 286-residue chain is Beta-lactamase SHV-3 (286 aa).

A signal peptide spans 1-21 (MRYIRLCIISLLATLPLAVHA). The Acyl-ester intermediate role is filled by Ser66. Cysteines 73 and 119 form a disulfide. Glu164 functions as the Proton acceptor in the catalytic mechanism. Substrate is bound at residue 230–232 (KTG).

This sequence belongs to the class-A beta-lactamase family.

It carries out the reaction a beta-lactam + H2O = a substituted beta-amino acid. In terms of biological role, this enzyme hydrolyzes cefotaxime, ceftazidime and other broad spectrum cephalosporins. The chain is Beta-lactamase SHV-3 (bla) from Klebsiella pneumoniae.